The following is a 158-amino-acid chain: NADH-quinone oxidoreductase subunit B 1 (158 aa).

Cys37, Cys38, Cys102, and Cys132 together coordinate [4Fe-4S] cluster.

Belongs to the complex I 20 kDa subunit family. NDH-1 is composed of 14 different subunits. Subunits NuoB, C, D, E, F, and G constitute the peripheral sector of the complex. The cofactor is [4Fe-4S] cluster.

It is found in the cell inner membrane. It carries out the reaction a quinone + NADH + 5 H(+)(in) = a quinol + NAD(+) + 4 H(+)(out). In terms of biological role, NDH-1 shuttles electrons from NADH, via FMN and iron-sulfur (Fe-S) centers, to quinones in the respiratory chain. Couples the redox reaction to proton translocation (for every two electrons transferred, four hydrogen ions are translocated across the cytoplasmic membrane), and thus conserves the redox energy in a proton gradient. The polypeptide is NADH-quinone oxidoreductase subunit B 1 (Azoarcus sp. (strain BH72)).